The primary structure comprises 534 residues: MQAPVVFMNASQERTTGRQAQISNITAAKAVADVIRTCLGPKAMLKMLLDPMGGLVLTNDGHAILREIDVAHPAAKSMLELSRTQDEEVGDGTTTVIILAGEILAQCAPYLIEKNIHPVIIIQALKKALTDALEVIKQVSKPVDVENDAAMKKLIQASIGTKYVIHWSEKMCELALDAVKTVRKDLGQTVEGEPNFEIDIKRYVRVEKIPGGDVLDSRVLKGVLLNKDVVHPKMSRHIENPRVVLLDCPLEYKKGESQTNIEIEKEEDWNRILQIEEEQVQLMCEQILAVRPTLVITEKGVSDLAQHYLLKGGCSVLRRVKKSDNNRIARVTGATIVNRVEDLKESDVGTNCGLFKVEMIGDEYFSFLDNCKEPKACTIMLRGGSKDILNEIDRNLQDAMAVARNVMLSPSLSPGGGATEMAVSVKLAEKAKQLEGIQQWPYQAVADAMECIPRTLIQNAGGDPIRLLSQLRAKHAQGNFTTGIDGDKGKIVDMVSYGIWEPEVIKQQSVKTAIESACLLLRVDDIVSGVRKQE.

At Met-1 the chain carries N-acetylmethionine. Position 257 is a phosphoserine (Ser-257). A disulfide bond links Cys-371 and Cys-377.

It belongs to the TCP-1 chaperonin family. In terms of assembly, heterooligomeric complex of about 850 to 900 kDa that forms two stacked rings, 12 to 16 nm in diameter.

It is found in the cytoplasm. Its function is as follows. Molecular chaperone; assists the folding of proteins upon ATP hydrolysis. Known to play a role, in vitro, in the folding of actin and tubulin. In yeast may play a role in mitotic spindle formation. This Saccharomyces cerevisiae (strain ATCC 204508 / S288c) (Baker's yeast) protein is T-complex protein 1 subunit gamma (CCT3).